We begin with the raw amino-acid sequence, 245 residues long: Thiopurine S-methyltransferase (245 aa).

Ser-14 bears the Phosphoserine mark. 29 to 40 (WREKWVDGKIGF) lines the S-adenosyl-L-methionine pocket. Phe-40 provides a ligand contact to substrate. Lys-58 bears the N6-acetyllysine mark. The S-adenosyl-L-methionine site is built by Leu-69, Glu-90, and Arg-152.

This sequence belongs to the class I-like SAM-binding methyltransferase superfamily. TPMT family. In terms of assembly, monomer.

The protein resides in the cytoplasm. The enzyme catalyses S-adenosyl-L-methionine + a thiopurine = S-adenosyl-L-homocysteine + a thiopurine S-methylether.. The sequence is that of Thiopurine S-methyltransferase (TPMT) from Panthera tigris (Tiger).